A 429-amino-acid chain; its full sequence is D-amino acid dehydrogenase (429 aa).

3–17 provides a ligand contact to FAD; it reads VLILGSGVIGTTTAW.

The protein belongs to the DadA oxidoreductase family. It depends on FAD as a cofactor.

The catalysed reaction is a D-alpha-amino acid + A + H2O = a 2-oxocarboxylate + AH2 + NH4(+). It participates in amino-acid degradation; D-alanine degradation; NH(3) and pyruvate from D-alanine: step 1/1. Oxidative deamination of D-amino acids. In Xanthomonas campestris pv. campestris (strain B100), this protein is D-amino acid dehydrogenase.